A 52-amino-acid polypeptide reads, in one-letter code: UPF0391 membrane protein XOO4217 (52 aa).

The next 2 membrane-spanning stretches (helical) occupy residues 5–25 (AMIF…GIAG) and 27–47 (ATNI…ISMF).

It belongs to the UPF0391 family.

The protein localises to the cell membrane. The protein is UPF0391 membrane protein XOO4217 of Xanthomonas oryzae pv. oryzae (strain KACC10331 / KXO85).